Consider the following 139-residue polypeptide: Large ribosomal subunit protein uL16 (139 aa).

The protein belongs to the universal ribosomal protein uL16 family. Part of the 50S ribosomal subunit.

Functionally, binds 23S rRNA and is also seen to make contacts with the A and possibly P site tRNAs. The sequence is that of Large ribosomal subunit protein uL16 from Picosynechococcus sp. (strain ATCC 27264 / PCC 7002 / PR-6) (Agmenellum quadruplicatum).